Here is a 479-residue protein sequence, read N- to C-terminus: 5-hydroxytryptamine receptor 7 (479 aa).

The Extracellular segment spans residues methionine 1 to valine 83. Residues asparagine 5 and asparagine 66 are each glycosylated (N-linked (GlcNAc...) asparagine). Residues isoleucine 84–phenylalanine 108 form a helical membrane-spanning segment. Over valine 109–tyrosine 118 the chain is Cytoplasmic. The helical transmembrane segment at leucine 119–valine 140 threads the bilayer. Over threonine 141 to histidine 152 the chain is Extracellular. A helical membrane pass occupies residues phenylalanine 153–isoleucine 178. Cysteine 155 and cysteine 231 are joined by a disulfide. Residue aspartate 162 participates in serotonin binding. The Cytoplasmic segment spans residues aspartate 179–cysteine 198. The chain crosses the membrane as a helical span at residues methionine 199–phenylalanine 219. Residues glycine 220–phenylalanine 237 are Extracellular-facing. The chain crosses the membrane as a helical span at residues glycine 238–tyrosine 260. At glutamine 261 to alanine 326 the chain is on the cytoplasmic side. Residues threonine 327 to phenylalanine 352 form a helical membrane-spanning segment. Topologically, residues isoleucine 353 to leucine 363 are extracellular. Residues tryptophan 364–phenylalanine 387 form a helical membrane-spanning segment. The Cytoplasmic portion of the chain corresponds to asparagine 388–aspartate 479. The S-palmitoyl cysteine moiety is linked to residue cysteine 401.

Belongs to the G-protein coupled receptor 1 family. Predominant isoform in spleen, caudate and hippocampus. As to expression, expressed at lower levels. In terms of tissue distribution, minor isoform in terms of expression.

The protein resides in the cell membrane. In terms of biological role, G-protein coupled receptor for 5-hydroxytryptamine (serotonin), a biogenic hormone that functions as a neurotransmitter, a hormone and a mitogen. Ligand binding causes a conformation change that triggers signaling via guanine nucleotide-binding proteins (G proteins) and modulates the activity of downstream effectors. HTR7 is coupled to G(s) G alpha proteins and mediates activation of adenylate cyclase activity. This Homo sapiens (Human) protein is 5-hydroxytryptamine receptor 7.